Reading from the N-terminus, the 208-residue chain is FMN-dependent NADH:quinone oxidoreductase (208 aa).

Residues 17–19 (SNS), 99–102 (MWNL), and 143–146 (SRGG) each bind FMN.

It belongs to the azoreductase type 1 family. Homodimer. It depends on FMN as a cofactor.

The catalysed reaction is 2 a quinone + NADH + H(+) = 2 a 1,4-benzosemiquinone + NAD(+). The enzyme catalyses N,N-dimethyl-1,4-phenylenediamine + anthranilate + 2 NAD(+) = 2-(4-dimethylaminophenyl)diazenylbenzoate + 2 NADH + 2 H(+). Functionally, quinone reductase that provides resistance to thiol-specific stress caused by electrophilic quinones. Its function is as follows. Also exhibits azoreductase activity. Catalyzes the reductive cleavage of the azo bond in aromatic azo compounds to the corresponding amines. In Staphylococcus aureus (strain COL), this protein is FMN-dependent NADH:quinone oxidoreductase.